Consider the following 340-residue polypeptide: Phosphoribosylformylglycinamidine cyclo-ligase (340 aa).

This sequence belongs to the AIR synthase family.

It localises to the cytoplasm. The enzyme catalyses 2-formamido-N(1)-(5-O-phospho-beta-D-ribosyl)acetamidine + ATP = 5-amino-1-(5-phospho-beta-D-ribosyl)imidazole + ADP + phosphate + H(+). Its pathway is purine metabolism; IMP biosynthesis via de novo pathway; 5-amino-1-(5-phospho-D-ribosyl)imidazole from N(2)-formyl-N(1)-(5-phospho-D-ribosyl)glycinamide: step 2/2. The polypeptide is Phosphoribosylformylglycinamidine cyclo-ligase (Streptococcus pyogenes serotype M12 (strain MGAS2096)).